Consider the following 105-residue polypeptide: Large ribosomal subunit protein eL36 (105 aa).

The interval 86–105 (QAGKKKRDDIANINRKASAK) is disordered.

This sequence belongs to the eukaryotic ribosomal protein eL36 family.

This Dictyostelium discoideum (Social amoeba) protein is Large ribosomal subunit protein eL36 (rpl36).